A 922-amino-acid polypeptide reads, in one-letter code: Isoleucine--tRNA ligase (922 aa).

A 'HIGH' region motif is present at residues 57-67; the sequence is PYANGDIHLGH. Glu553 lines the L-isoleucyl-5'-AMP pocket. The 'KMSKS' region signature appears at 594–598; that stretch reads KMSKS. ATP is bound at residue Lys597. Positions 892, 895, 912, and 915 each coordinate Zn(2+).

This sequence belongs to the class-I aminoacyl-tRNA synthetase family. IleS type 1 subfamily. In terms of assembly, monomer. Zn(2+) is required as a cofactor.

The protein localises to the cytoplasm. It catalyses the reaction tRNA(Ile) + L-isoleucine + ATP = L-isoleucyl-tRNA(Ile) + AMP + diphosphate. Its function is as follows. Catalyzes the attachment of isoleucine to tRNA(Ile). As IleRS can inadvertently accommodate and process structurally similar amino acids such as valine, to avoid such errors it has two additional distinct tRNA(Ile)-dependent editing activities. One activity is designated as 'pretransfer' editing and involves the hydrolysis of activated Val-AMP. The other activity is designated 'posttransfer' editing and involves deacylation of mischarged Val-tRNA(Ile). This chain is Isoleucine--tRNA ligase, found in Desulfitobacterium hafniense (strain Y51).